A 593-amino-acid polypeptide reads, in one-letter code: uncharacterized protein (593 aa).

A run of 12 helical transmembrane segments spans residues 21–41, 60–80, 97–117, 148–168, 204–224, 243–263, 275–295, 328–348, 359–379, 410–430, 457–477, and 485–505; these read PAVF…SVVY, VGWW…YCGI, FSFW…GLVF, MALT…VVGL, VDVI…GFGI, WMVG…VSGV, MALA…LFLL, WTIF…MFIA, FIGA…TIFG, GLPI…FFFV, VYWA…GGAG, and AAIA…YAMT.

The protein belongs to the BCCT transporter (TC 2.A.15) family.

The protein resides in the cell membrane. This is an uncharacterized protein from Mycobacterium tuberculosis (strain CDC 1551 / Oshkosh).